The following is a 110-amino-acid chain: Insulin (110 aa).

The signal sequence occupies residues 1–24 (MALWMRLLPLLALLALWGPDPAQA). 3 disulfide bridges follow: Cys31–Cys96, Cys43–Cys109, and Cys95–Cys100. The propeptide at 57–87 (EAEDLQVGQVELGGGPGAGSLQPLALEGSLQ) is c peptide.

It belongs to the insulin family. In terms of assembly, heterodimer of a B chain and an A chain linked by two disulfide bonds.

It localises to the secreted. Insulin decreases blood glucose concentration. It increases cell permeability to monosaccharides, amino acids and fatty acids. It accelerates glycolysis, the pentose phosphate cycle, and glycogen synthesis in liver. The polypeptide is Insulin (INS) (Pongo pygmaeus (Bornean orangutan)).